Here is a 246-residue protein sequence, read N- to C-terminus: uncharacterized protein (246 aa).

This is an uncharacterized protein from Acanthamoeba polyphaga (Amoeba).